Consider the following 208-residue polypeptide: Ras-related protein Rab6 (208 aa).

19–27 (GEQSVGKTS) contributes to the GTP binding site. Positions 41–49 (YQATIGIDF) match the Effector region motif. Residues 67–71 (DTAGQ), 125–128 (NKTD), and 155–157 (SAK) contribute to the GTP site. Residues 176–208 (MDSTENKPSEDMQEVVLKDSPNETKDPEGGCAC) are disordered. Residues 179–208 (TENKPSEDMQEVVLKDSPNETKDPEGGCAC) show a composition bias toward basic and acidic residues.

The protein belongs to the small GTPase superfamily. Rab family. In terms of assembly, interacts with Rich and Act5C. Interacts with BicD (via C-terminal domain). Interacts (in GTP-bound) with GCC1/CG10703 and cbs. Interacts with Gorab (via C-terminus); binds to a Gorab homodimer, this interaction seems to be required for trans-Golgi localization of Gorab. Expressed in larval eye, wing and leg imaginal disks and in salivary gland. Expressed in the larval optic lobe, showing an enrichment in the neuropil. In the adult brain, expressed in photoreceptors and mushroom body.

The protein resides in the golgi apparatus membrane. It is found in the synapse. The protein localises to the perikaryon. Its function is as follows. Protein transport. Regulator of membrane traffic from the Golgi apparatus towards the endoplasmic reticulum (ER). Mediates membrane trafficking during egg chamber growth and organization, possibly upstream of exocyst component Sec5. Also during oogenesis, plays a role, together with BicD but independently of Sec5, in the polarization of the oocyte microtubule cytoskeleton, in the localization of oskar mRNA and in the anterodorsal secretion of grk. Required for anterograde opsin transport through the ER-Golgi complex. Plays a role, together with Rich, in regulating CadN transport in photoreceptor cells which is required for the formation of normal synaptic connections between axons from the inner photoreceptor cells in the eye and postsynaptic cells in the brain medulla layer M6. Necessary for proper development of bristle shafts of macrochaete and microchaete on the head, thorax and scutellum. Modulates Notch signaling. As a key regulator of vesicular traffic, plays a critical role in the regulation of actin organization and is required for normal rates of phagocytic uptake during phagocytosis involved in defense against viral and fungal infection. The chain is Ras-related protein Rab6 from Drosophila melanogaster (Fruit fly).